An 808-amino-acid chain; its full sequence is Digalactosyldiacylglycerol synthase 1, chloroplastic (808 aa).

The segment at M1–S23 is disordered. A chloroplast-targeting transit peptide spans M1–R58. Residues S10–S23 show a composition bias toward low complexity.

It belongs to the glycosyltransferase group 1 family. Glycosyltransferase 4 subfamily.

It localises to the plastid. It is found in the chloroplast outer membrane. It carries out the reaction a 1,2-diacyl-3-O-(beta-D-galactosyl)-sn-glycerol + UDP-alpha-D-galactose = a 1,2-diacyl-3-O-[alpha-D-galactosyl-(1-&gt;6)-beta-D-galactosyl]-sn-glycerol + UDP + H(+). Functionally, involved in the synthesis of diacylglycerol galactolipids that are specifically found in thylakoid membranes. Specific for alpha-glycosidic linkages. Responsible for the final assembly of galactolipids in photosynthetic membranes. Digalactosyldiacylglycerol (DGDG) provides stability to the photosystem I (PSI) complex, especially to the PsaA, PsaB, PsaC, PsaL and PsaH subunits. The polypeptide is Digalactosyldiacylglycerol synthase 1, chloroplastic (Arabidopsis thaliana (Mouse-ear cress)).